The chain runs to 526 residues: Phosphoenolpyruvate carboxylase (526 aa).

The protein belongs to the PEPCase type 2 family. Homotetramer. Requires Mg(2+) as cofactor.

It carries out the reaction oxaloacetate + phosphate = phosphoenolpyruvate + hydrogencarbonate. In terms of biological role, catalyzes the irreversible beta-carboxylation of phosphoenolpyruvate (PEP) to form oxaloacetate (OAA), a four-carbon dicarboxylic acid source for the tricarboxylic acid cycle. The sequence is that of Phosphoenolpyruvate carboxylase from Methanosarcina barkeri (strain Fusaro / DSM 804).